We begin with the raw amino-acid sequence, 439 residues long: Serine--tRNA ligase (439 aa).

247-249 (TSE) serves as a coordination point for L-serine. 278 to 280 (RSE) lines the ATP pocket. E301 provides a ligand contact to L-serine. 365–368 (EISS) contributes to the ATP binding site. An L-serine-binding site is contributed by S400.

This sequence belongs to the class-II aminoacyl-tRNA synthetase family. Type-1 seryl-tRNA synthetase subfamily. In terms of assembly, homodimer. The tRNA molecule binds across the dimer.

The protein localises to the cytoplasm. The catalysed reaction is tRNA(Ser) + L-serine + ATP = L-seryl-tRNA(Ser) + AMP + diphosphate + H(+). It catalyses the reaction tRNA(Sec) + L-serine + ATP = L-seryl-tRNA(Sec) + AMP + diphosphate + H(+). The protein operates within aminoacyl-tRNA biosynthesis; selenocysteinyl-tRNA(Sec) biosynthesis; L-seryl-tRNA(Sec) from L-serine and tRNA(Sec): step 1/1. Catalyzes the attachment of serine to tRNA(Ser). Is also able to aminoacylate tRNA(Sec) with serine, to form the misacylated tRNA L-seryl-tRNA(Sec), which will be further converted into selenocysteinyl-tRNA(Sec). The protein is Serine--tRNA ligase of Paracidovorax citrulli (strain AAC00-1) (Acidovorax citrulli).